Consider the following 419-residue polypeptide: Gamma-glutamyl phosphate reductase (419 aa).

The protein belongs to the gamma-glutamyl phosphate reductase family.

Its subcellular location is the cytoplasm. It catalyses the reaction L-glutamate 5-semialdehyde + phosphate + NADP(+) = L-glutamyl 5-phosphate + NADPH + H(+). It participates in amino-acid biosynthesis; L-proline biosynthesis; L-glutamate 5-semialdehyde from L-glutamate: step 2/2. Functionally, catalyzes the NADPH-dependent reduction of L-glutamate 5-phosphate into L-glutamate 5-semialdehyde and phosphate. The product spontaneously undergoes cyclization to form 1-pyrroline-5-carboxylate. The sequence is that of Gamma-glutamyl phosphate reductase from Nitratidesulfovibrio vulgaris (strain DP4) (Desulfovibrio vulgaris).